Consider the following 602-residue polypeptide: Elongation factor 4 (602 aa).

A tr-type G domain is found at 5-187 (DHIRNFAIIA…QIIVSLPAPE (183 aa)). GTP contacts are provided by residues 17–22 (DHGKST) and 134–137 (NKVD).

It belongs to the TRAFAC class translation factor GTPase superfamily. Classic translation factor GTPase family. LepA subfamily.

The protein localises to the cell inner membrane. The catalysed reaction is GTP + H2O = GDP + phosphate + H(+). Required for accurate and efficient protein synthesis under certain stress conditions. May act as a fidelity factor of the translation reaction, by catalyzing a one-codon backward translocation of tRNAs on improperly translocated ribosomes. Back-translocation proceeds from a post-translocation (POST) complex to a pre-translocation (PRE) complex, thus giving elongation factor G a second chance to translocate the tRNAs correctly. Binds to ribosomes in a GTP-dependent manner. The polypeptide is Elongation factor 4 (Pelagibacter ubique (strain HTCC1062)).